The sequence spans 26 residues: Delta-hemolysin (26 aa).

At Met1 the chain carries N-formylmethionine.

Belongs to the delta-lysin family.

It is found in the secreted. Its subcellular location is the host cell membrane. Its function is as follows. Lyses erythrocytes and many other mammalian cells. The sequence is that of Delta-hemolysin (hld) from Staphylococcus aureus (strain MSSA476).